Consider the following 545-residue polypeptide: Eukaryotic translation initiation factor 3 subunit D-2 (545 aa).

A disordered region spans residues 94 to 148; sequence FQRGRFRGNTRNNPRTRGRTGRGGAVTGTGGNQPGVGVNERTKYGKGRDNRRQMG. Basic residues predominate over residues 95–113; that stretch reads QRGRFRGNTRNNPRTRGRT. Residues 114 to 127 show a composition bias toward gly residues; it reads GRGGAVTGTGGNQP. The span at 133–145 shows a compositional bias: basic and acidic residues; the sequence is ERTKYGKGRDNRR. The tract at residues 287–301 is RNA gate; sequence QFDLLTVNETALEPP.

This sequence belongs to the eIF-3 subunit D family. In terms of assembly, component of the eukaryotic translation initiation factor 3 (eIF-3) complex. The eIF-3 complex interacts with pix.

The protein resides in the cytoplasm. MRNA cap-binding component of the eukaryotic translation initiation factor 3 (eIF-3) complex, which is involved in protein synthesis of a specialized repertoire of mRNAs and, together with other initiation factors, stimulates binding of mRNA and methionyl-tRNAi to the 40S ribosome. The eIF-3 complex specifically targets and initiates translation of a subset of mRNAs involved in cell proliferation. In the eIF-3 complex, eif3d specifically recognizes and binds the 7-methylguanosine cap of a subset of mRNAs. The chain is Eukaryotic translation initiation factor 3 subunit D-2 from Drosophila pseudoobscura pseudoobscura (Fruit fly).